Consider the following 449-residue polypeptide: MQLRTGAASVVRTGLGLTQSRCAVQSLTAVPLERRIRQSKAFYHNTKKNDSAWAAAVSVAGNIVNNAVTKAIKGTDGLPTIDPLRLVAGEMKFLTGNIRKLLGSGHPSLDRAAKYYTQAEGKHVRPLIVLLMSRATALCPKAPQRQQSTLQASAAIDTSISPLNILSDFNPSDATPVSIPADTDILPSQRRLAEITELIHTASLLHDDVIDHSESRRGAPSANLEFGNKMAVLAGDFLLGRASVALARLRHAEVVELLATVIANLVEGEFMQLKNTARDEKNPKWSEETLTYYLQKTYLKTASLISKSCRASALLGGADAATVDAAYLYGKNLGLAFQLVDDMLDYTRSEKELGKPAGADLELGLATAPLLFAWKTMPELGPLVGRKFEKEGDAARARELVLQSNGIEQTRALAQDYAEKAIEAISGFPDSEAKDGLIEMAVKTLKRNK.

Isopentenyl diphosphate is bound by residues Lys122, Arg125, and His200. Mg(2+) contacts are provided by Asp207 and Asp211. An all-trans-polyprenyl diphosphate is bound at residue Arg216. Arg217 serves as a coordination point for isopentenyl diphosphate. An all-trans-polyprenyl diphosphate-binding residues include Lys300, Thr301, Gln338, and Lys355.

It belongs to the FPP/GGPP synthase family. It depends on Mg(2+) as a cofactor.

The protein localises to the mitochondrion. The protein operates within cofactor biosynthesis; ubiquinone biosynthesis. Functionally, assembly of polyisoprenoid side chains. The polyprenyl synthase of coenzyme Q biosynthesis catalyzes the formation from isopentenyl diphosphate of all trans-polyprenyl pyrophosphates generally ranging in length of between 6 and 10 isoprene units depending on the species. This Neurospora crassa (strain ATCC 24698 / 74-OR23-1A / CBS 708.71 / DSM 1257 / FGSC 987) protein is Probable hexaprenyl pyrophosphate synthase, mitochondrial.